We begin with the raw amino-acid sequence, 289 residues long: MWFQLKIEHCPNDKIEEITEELEECGALSITLTDKNDNPVLEPEPGTTPLWPEVIIHALFAQAEEAQYAREQLVAKRPSLHCSLELLADKNWERAWMDDFRPQRFGNRLWVCPTWLPPPEPDAVNLILDPGLAFGTGTHATTSLCLTWLEQADLKNKSIIDYGCGSGILSLAAIKLGAKHVYAVDIDNQALQATQSNAHANHITESQLSISSPEALQNPVHLVIANILLAPLISLKERFHQLLPSGAHLVTSGILEEQAPLLIDAYDSAFTHIATEYCEGWSLLVFTSK.

The S-adenosyl-L-methionine site is built by T142, G163, D185, and N226.

The protein belongs to the methyltransferase superfamily. PrmA family.

The protein resides in the cytoplasm. It carries out the reaction L-lysyl-[protein] + 3 S-adenosyl-L-methionine = N(6),N(6),N(6)-trimethyl-L-lysyl-[protein] + 3 S-adenosyl-L-homocysteine + 3 H(+). Methylates ribosomal protein L11. The protein is Ribosomal protein L11 methyltransferase of Legionella pneumophila (strain Lens).